We begin with the raw amino-acid sequence, 281 residues long: Ribosomal RNA small subunit methyltransferase I (281 aa).

This sequence belongs to the methyltransferase superfamily. RsmI family.

The protein resides in the cytoplasm. It carries out the reaction cytidine(1402) in 16S rRNA + S-adenosyl-L-methionine = 2'-O-methylcytidine(1402) in 16S rRNA + S-adenosyl-L-homocysteine + H(+). Its function is as follows. Catalyzes the 2'-O-methylation of the ribose of cytidine 1402 (C1402) in 16S rRNA. The protein is Ribosomal RNA small subunit methyltransferase I of Pasteurella multocida (strain Pm70).